Consider the following 156-residue polypeptide: SsrA-binding protein (156 aa).

The protein belongs to the SmpB family.

The protein resides in the cytoplasm. In terms of biological role, required for rescue of stalled ribosomes mediated by trans-translation. Binds to transfer-messenger RNA (tmRNA), required for stable association of tmRNA with ribosomes. tmRNA and SmpB together mimic tRNA shape, replacing the anticodon stem-loop with SmpB. tmRNA is encoded by the ssrA gene; the 2 termini fold to resemble tRNA(Ala) and it encodes a 'tag peptide', a short internal open reading frame. During trans-translation Ala-aminoacylated tmRNA acts like a tRNA, entering the A-site of stalled ribosomes, displacing the stalled mRNA. The ribosome then switches to translate the ORF on the tmRNA; the nascent peptide is terminated with the 'tag peptide' encoded by the tmRNA and targeted for degradation. The ribosome is freed to recommence translation, which seems to be the essential function of trans-translation. This is SsrA-binding protein from Trichodesmium erythraeum (strain IMS101).